Consider the following 603-residue polypeptide: MLFRASQPEDKPMKMTTEEAFVKTLQMHGIQHAFGIIGSAMMPISDIFGKAGITFWDCAHEGSGGMMADGYTRATGKMSMMIAQNGPGITNFVTAVKTAYWNHTPLLLVTPQAANKTMGQGGFQEVEQMAAFKDMVCYQEEVRDPTRMAEVLNRVILNAKRYSAPAQINVPRDYFTQVIDIELPKIVDFERPSGGEEALDEAAKLLSEAKFPVILNGAGVILAGAIPATAELAERLDAPVCCGYQHNDAFPGSHPLHAGPLGYNGSKAGMELISKADVVLALGTRLNPFSTLPGYGIDYWPKDAKIIQVDVKPERIGLTKPVAVGIVGDAKKVAKTILAKLSDTAGDADREERKATIAKTKSAWAQELSSMDHEQDDPGTTWNERARGAKPDWMSPRMAWRAIQAALPKEAIISSDIGNNCAIGNAYPSFEEGRKYLAPGLFGPCGYGLPAVVGAKIGCPDTPVVGFSGDGAFGIAVNELTAIGRGEWPAVTHVVFRNYQWGAEKRNSTLWFDDNFVGTELDEQVSYAGIAKACGLKGVVARTMDELTDALDQAIKDQKAGTTTLIEAMINQELGEPFRRDAMKKPVAVAGIDPADMREQQVD.

It belongs to the TPP enzyme family. Mg(2+) is required as a cofactor. It depends on thiamine diphosphate as a cofactor.

The catalysed reaction is acetyl phosphate + sulfite + H(+) = sulfoacetaldehyde + phosphate. Functionally, catalyzes the degradation of sulfoacetaldehyde into sulfite and acetyl phosphate. Involved in sulfolactate degradation. This is Sulfoacetaldehyde acetyltransferase from Roseovarius nubinhibens (strain ATCC BAA-591 / DSM 15170 / ISM).